Here is a 198-residue protein sequence, read N- to C-terminus: MICOS complex subunit MIC26 (198 aa).

The signal sequence occupies residues 1–25; the sequence is MFKVIQRSVGPASLSLLTFKVYAAP. The chain crosses the membrane as a helical span at residues 108-128; that stretch reads PGFFPRLGVIGFAGLIGLLLA. Ser162 is a glycosylation site (O-linked (Xyl...) (chondroitin sulfate) serine).

Belongs to the apolipoprotein O/MICOS complex subunit Mic27 family. As to quaternary structure, component of the mitochondrial contact site and cristae organizing system (MICOS) complex, composed of at least MICOS10/MIC10, CHCHD3/MIC19, CHCHD6/MIC25, APOOL/MIC27, IMMT/MIC60, APOO/MIC23/MIC26 and MICOS13/MIC13. This complex was also known under the names MINOS or MitOS complex. he MICOS complex associates with mitochondrial outer membrane proteins SAMM50, MTX1 and MTX2 (together described as components of the mitochondrial outer membrane sorting assembly machinery (SAM) complex) and DNAJC11, mitochondrial inner membrane protein TMEM11 and with HSPA9. The MICOS and SAM complexes together with DNAJC11 are part of a large protein complex spanning both membranes termed the mitochondrial intermembrane space bridging (MIB) complex. Interacts with IMMT/MIC60. Interacts with MICOS10/MIC10 and APOOL/MIC27. Post-translationally, O-glycosylation; glycosaminoglycan of chondroitin-sulfate type. In terms of tissue distribution, expressed in all tissues examined. Up-regulated in diabetic heart.

The protein resides in the mitochondrion inner membrane. The protein localises to the secreted. Its subcellular location is the mitochondrion. It localises to the golgi apparatus membrane. It is found in the endoplasmic reticulum membrane. In terms of biological role, component of the MICOS complex, a large protein complex of the mitochondrial inner membrane that plays crucial roles in the maintenance of crista junctions, inner membrane architecture, and formation of contact sites to the outer membrane. Plays a crucial role in crista junction formation and mitochondrial function. Can promote cardiac lipotoxicity by enhancing mitochondrial respiration and fatty acid metabolism in cardiac myoblasts. Promotes cholesterol efflux from macrophage cells. Detected in HDL, LDL and VLDL. Secreted by a microsomal triglyceride transfer protein (MTTP)-dependent mechanism, probably as a VLDL-associated protein that is subsequently transferred to HDL. The sequence is that of MICOS complex subunit MIC26 (APOO) from Homo sapiens (Human).